A 492-amino-acid polypeptide reads, in one-letter code: Spore germination protein GerLA (492 aa).

3 consecutive transmembrane segments (helical) span residues 295 to 315 (IIAV…QGLI), 384 to 404 (FLVI…VYSI), and 410 to 430 (ILLF…IILA).

This sequence belongs to the GerABKA family.

It localises to the membrane. Its function is as follows. Contributes to the L-alanine germination response. This Bacillus cereus protein is Spore germination protein GerLA (gerLA).